We begin with the raw amino-acid sequence, 357 residues long: Gene 58 protein (357 aa).

The protein belongs to the herpesviridae BMRF2 family.

In Saimiri sciureus (Common squirrel monkey), this protein is Gene 58 protein (58).